The sequence spans 306 residues: Homoserine O-acetyltransferase (306 aa).

Residue C142 is the Acyl-thioester intermediate of the active site. Positions 163 and 192 each coordinate substrate. H235 (proton acceptor) is an active-site residue. E237 is an active-site residue. R249 provides a ligand contact to substrate.

Belongs to the MetA family.

The protein resides in the cytoplasm. It catalyses the reaction L-homoserine + acetyl-CoA = O-acetyl-L-homoserine + CoA. Its pathway is amino-acid biosynthesis; L-methionine biosynthesis via de novo pathway; O-acetyl-L-homoserine from L-homoserine: step 1/1. Its function is as follows. Transfers an acetyl group from acetyl-CoA to L-homoserine, forming acetyl-L-homoserine. In Brucella abortus (strain S19), this protein is Homoserine O-acetyltransferase.